The primary structure comprises 228 residues: uncharacterized protein (228 aa).

Disordered stretches follow at residues 1–62 and 160–228; these read MQRP…VGRF and SPRP…LSGV. Positions 13–33 are enriched in low complexity; the sequence is AASTRAPPRPSAPQQGRRQPS. Polar residues predominate over residues 167-176; that stretch reads RGQQVTQDGP.

This is an uncharacterized protein from Homo sapiens (Human).